The chain runs to 125 residues: Aldolase FrzH (125 aa).

It catalyses the reaction (2S)-3-(4-methoxyphenyl)-2-[(3S)-3-(methylamino)-8-oxo-1-azaspiro[4.5]decan-1-yl]propanal = (1S,3S,6S,7S,8R)-7-hydroxy-6-[(4-methoxyphenyl)methyl]-3-(methylamino)-5-azatricyclo[6.3.1.0(1,5)]dodecan-9-one. Its pathway is secondary metabolite biosynthesis. Its function is as follows. Aldolase; part of the gene cluster that mediates the biosynthesis of the alkaloid (-)-FR901483, a potent immunosuppressant that shows efficacy in animal models and a probable inhibitor of purine nucleotide biosynthesis by targeting phosphoribosylpyrophosphate amidotransferase (PPAT). Within the pathway, FrzH is a new kind of aldolase with no similarities to known aldolases, and which catalyzes the intramolecular aldol condensation via formation of a C9-C3' bond to yield an aza-tricyclic product. The biosynthesis of (-)-FR901483 starts with the condensation of two L-tyrosines to yield (S,S)-dityrosyl-piperazine. This process occurs in 3 steps with the non-canonical nonribosomal peptide synthetase FrzA catalyzing the reduction of L-tyrosine into L-tyrosinal, the spontaneous condensation of 2 L-tyrosinal units, and the subsequent reduction by the NmrA-like family domain-containing oxidoreductase FrzB. The cytochrome P450 monooxygenase FrzC then performs coupling between N10 and C1' to morph the piperazine into a 1,4-diazabicyclo[3.2.1]octane spiro-fused to a 2,5-cyclohexadienone. The dienone portion is further reduced to cyclohexanone by the flavin-dependent reductase FrzD. The methyltranserases (MTs) FrzE and FrzF are then involved in the methylation at the C10' amine and the C4 phenolic oxygen, respectively. The order of the two MTs appear to be interchangeable. Cleavage of the C9-N10' bond by the dioxygenase FrzG then leads to formation of a conjugated iminium. In addition to the oxidation of C9, an additional dehydrogenation between C7 and C8 can occur to give a likely shunt product. The next biosynthetic step is the intramolecular aldol condensation catalyzed by the newly identified aldolase FrzH to yield an aza-tricyclic product with the formation of a C9-C3' bond. The short-chain dehydrogenase/reductase FrzI then produces dephospho-(-)-FR901483 that is phosphorylated at C4'-OH into (-)-FR901483 by the phosphotransferase FrzJ. This Cladobotryum sp protein is Aldolase FrzH.